Consider the following 119-residue polypeptide: Immunoglobulin lambda variable 2-11 (119 aa).

An N-terminal signal peptide occupies residues 1–19 (MAWALLLLSLLTQGTGSWA). Glutamine 20 carries the pyrrolidone carboxylic acid modification. The segment at 20 to 44 (QSALTQPRSVSGSPGQSVTISCTGT) is framework-1. The region spanning 20-119 (QSALTQPRSV…CSYAGSYTFH (100 aa)) is the Ig-like domain. A disulfide bond links cysteine 41 and cysteine 109. The tract at residues 45–53 (SSDVGGYNY) is complementarity-determining-1. The tract at residues 54-70 (VSWYQQHPGKAPKLMIY) is framework-2. Residues 71–73 (DVS) are complementarity-determining-2. The interval 74-109 (KRPSGVPDRFSGSKSGNTASLTISGLQAEDEADYYC) is framework-3. Residues 110 to 119 (CSYAGSYTFH) are complementarity-determining-3.

As to quaternary structure, immunoglobulins are composed of two identical heavy chains and two identical light chains; disulfide-linked.

The protein resides in the secreted. The protein localises to the cell membrane. Its function is as follows. V region of the variable domain of immunoglobulin light chains that participates in the antigen recognition. Immunoglobulins, also known as antibodies, are membrane-bound or secreted glycoproteins produced by B lymphocytes. In the recognition phase of humoral immunity, the membrane-bound immunoglobulins serve as receptors which, upon binding of a specific antigen, trigger the clonal expansion and differentiation of B lymphocytes into immunoglobulins-secreting plasma cells. Secreted immunoglobulins mediate the effector phase of humoral immunity, which results in the elimination of bound antigens. The antigen binding site is formed by the variable domain of one heavy chain, together with that of its associated light chain. Thus, each immunoglobulin has two antigen binding sites with remarkable affinity for a particular antigen. The variable domains are assembled by a process called V-(D)-J rearrangement and can then be subjected to somatic hypermutations which, after exposure to antigen and selection, allow affinity maturation for a particular antigen. The protein is Immunoglobulin lambda variable 2-11 of Homo sapiens (Human).